The sequence spans 486 residues: Malonate-semialdehyde dehydrogenase (486 aa).

Positions 154, 178, 181, 182, and 231 each coordinate NAD(+). Cys-286 (nucleophile) is an active-site residue. Position 386 (Glu-386) interacts with NAD(+).

It belongs to the aldehyde dehydrogenase family. IolA subfamily. As to quaternary structure, homotetramer.

The enzyme catalyses 3-oxopropanoate + NAD(+) + CoA + H2O = hydrogencarbonate + acetyl-CoA + NADH + H(+). The catalysed reaction is 2-methyl-3-oxopropanoate + NAD(+) + CoA + H2O = propanoyl-CoA + hydrogencarbonate + NADH + H(+). The protein operates within polyol metabolism; myo-inositol degradation into acetyl-CoA; acetyl-CoA from myo-inositol: step 7/7. Catalyzes the oxidation of malonate semialdehyde (MSA) and methylmalonate semialdehyde (MMSA) into acetyl-CoA and propanoyl-CoA, respectively. Is involved in a myo-inositol catabolic pathway. Bicarbonate, and not CO2, is the end-product of the enzymatic reaction. The sequence is that of Malonate-semialdehyde dehydrogenase from Bacillus cereus (strain G9842).